The sequence spans 470 residues: MSQNFGKISQVIGAVIDVEFEPGKLPPIYNALRVTNPAIDDKEYNLVLEVAQHLGENAVRTIAMDSTDGLVRGQAVLDTGKQISVPVGRKTLGRILNVIGEPVDEMGPVNAEKEYGIHREAPAFVDQSTKVEAFTTGIKVVDLLAPYARGGKIGLFGGAGVGKTVLIMELINNIAKQHGGFSVFAGVGERTREGNDLWMEMKESGVLDKAALVYGQMNEPPGARARVALSALSIAEYFRDEEGQNVLLFVDNIFRFTQAGSEVSALLGRIPSAVGYQPTLATEMGELQERITSTTKGSITSVQAIYVPADDLTDPAPATAFAHLDATTVLSRQIAELGIYPAVDPLDSTSRILDPQVIGEEHYSIARQVQYVLQKYKDLQDIIAILGMDELSEEDKLVVARARKIQRFLSQPFHVAEAFTGSPGKYVELKDTIKGFQEIVAGKHDDVPEQAFYMVGTIEEALEKAKKLAA.

ATP is bound at residue 157–164 (GGAGVGKT).

This sequence belongs to the ATPase alpha/beta chains family. As to quaternary structure, F-type ATPases have 2 components, CF(1) - the catalytic core - and CF(0) - the membrane proton channel. CF(1) has five subunits: alpha(3), beta(3), gamma(1), delta(1), epsilon(1). CF(0) has three main subunits: a(1), b(2) and c(9-12). The alpha and beta chains form an alternating ring which encloses part of the gamma chain. CF(1) is attached to CF(0) by a central stalk formed by the gamma and epsilon chains, while a peripheral stalk is formed by the delta and b chains.

It localises to the cell inner membrane. The catalysed reaction is ATP + H2O + 4 H(+)(in) = ADP + phosphate + 5 H(+)(out). Functionally, produces ATP from ADP in the presence of a proton gradient across the membrane. The catalytic sites are hosted primarily by the beta subunits. The chain is ATP synthase subunit beta from Geobacter sulfurreducens (strain ATCC 51573 / DSM 12127 / PCA).